Reading from the N-terminus, the 193-residue chain is ATP synthase subunit b 1 (193 aa).

Residues Gln-9 to Gly-28 are disordered. A compositionally biased stretch (basic and acidic residues) spans Glu-10–Thr-20. A helical transmembrane segment spans residues Thr-40–Leu-59.

Belongs to the ATPase B chain family. F-type ATPases have 2 components, F(1) - the catalytic core - and F(0) - the membrane proton channel. F(1) has five subunits: alpha(3), beta(3), gamma(1), delta(1), epsilon(1). F(0) has three main subunits: a(1), b(2) and c(10-14). The alpha and beta chains form an alternating ring which encloses part of the gamma chain. F(1) is attached to F(0) by a central stalk formed by the gamma and epsilon chains, while a peripheral stalk is formed by the delta and b chains.

The protein localises to the cell inner membrane. Functionally, f(1)F(0) ATP synthase produces ATP from ADP in the presence of a proton or sodium gradient. F-type ATPases consist of two structural domains, F(1) containing the extramembraneous catalytic core and F(0) containing the membrane proton channel, linked together by a central stalk and a peripheral stalk. During catalysis, ATP synthesis in the catalytic domain of F(1) is coupled via a rotary mechanism of the central stalk subunits to proton translocation. Its function is as follows. Component of the F(0) channel, it forms part of the peripheral stalk, linking F(1) to F(0). This Chelativorans sp. (strain BNC1) protein is ATP synthase subunit b 1.